An 82-amino-acid polypeptide reads, in one-letter code: ATP synthase subunit c, chloroplastic (82 aa).

2 consecutive transmembrane segments (helical) span residues 7 to 27 (AASV…PGIG) and 57 to 77 (LAFM…LLFA).

The protein belongs to the ATPase C chain family. As to quaternary structure, F-type ATPases have 2 components, F(1) - the catalytic core - and F(0) - the membrane proton channel. F(1) has five subunits: alpha(3), beta(3), gamma(1), delta(1), epsilon(1). F(0) has four main subunits: a(1), b(1), b'(1) and c(10-14). The alpha and beta chains form an alternating ring which encloses part of the gamma chain. F(1) is attached to F(0) by a central stalk formed by the gamma and epsilon chains, while a peripheral stalk is formed by the delta, b and b' chains.

The protein localises to the plastid. It localises to the chloroplast thylakoid membrane. In terms of biological role, f(1)F(0) ATP synthase produces ATP from ADP in the presence of a proton or sodium gradient. F-type ATPases consist of two structural domains, F(1) containing the extramembraneous catalytic core and F(0) containing the membrane proton channel, linked together by a central stalk and a peripheral stalk. During catalysis, ATP synthesis in the catalytic domain of F(1) is coupled via a rotary mechanism of the central stalk subunits to proton translocation. Functionally, key component of the F(0) channel; it plays a direct role in translocation across the membrane. A homomeric c-ring of between 10-14 subunits forms the central stalk rotor element with the F(1) delta and epsilon subunits. The polypeptide is ATP synthase subunit c, chloroplastic (Guillardia theta (Cryptophyte)).